The sequence spans 199 residues: Chaperone protein TorD (199 aa).

Belongs to the TorD/DmsD family. TorD subfamily.

It is found in the cytoplasm. In terms of biological role, involved in the biogenesis of TorA. Acts on TorA before the insertion of the molybdenum cofactor and, as a result, probably favors a conformation of the apoenzyme that is competent for acquiring the cofactor. This is Chaperone protein TorD from Escherichia coli (strain ATCC 8739 / DSM 1576 / NBRC 3972 / NCIMB 8545 / WDCM 00012 / Crooks).